We begin with the raw amino-acid sequence, 468 residues long: Argininosuccinate lyase (468 aa).

This sequence belongs to the lyase 1 family. Argininosuccinate lyase subfamily.

The protein resides in the cytoplasm. It catalyses the reaction 2-(N(omega)-L-arginino)succinate = fumarate + L-arginine. The protein operates within amino-acid biosynthesis; L-arginine biosynthesis; L-arginine from L-ornithine and carbamoyl phosphate: step 3/3. The chain is Argininosuccinate lyase from Paraburkholderia phytofirmans (strain DSM 17436 / LMG 22146 / PsJN) (Burkholderia phytofirmans).